The chain runs to 171 residues: CDP-archaeol synthase (171 aa).

Transmembrane regions (helical) follow at residues 7 to 27, 55 to 75, 84 to 104, 115 to 135, and 141 to 161; these read MFWA…PVLL, FLGG…LTPA, VLLA…GSFI, PAVG…AYPV, and GQML…NYFA.

Belongs to the CDP-archaeol synthase family. Mg(2+) is required as a cofactor.

The protein localises to the cell membrane. It carries out the reaction 2,3-bis-O-(geranylgeranyl)-sn-glycerol 1-phosphate + CTP + H(+) = CDP-2,3-bis-O-(geranylgeranyl)-sn-glycerol + diphosphate. Its pathway is membrane lipid metabolism; glycerophospholipid metabolism. Catalyzes the formation of CDP-2,3-bis-(O-geranylgeranyl)-sn-glycerol (CDP-archaeol) from 2,3-bis-(O-geranylgeranyl)-sn-glycerol 1-phosphate (DGGGP) and CTP. This reaction is the third ether-bond-formation step in the biosynthesis of archaeal membrane lipids. In Thermococcus gammatolerans (strain DSM 15229 / JCM 11827 / EJ3), this protein is CDP-archaeol synthase.